Here is a 272-residue protein sequence, read N- to C-terminus: NADPH-dependent 7-cyano-7-deazaguanine reductase (272 aa).

82–84 (IES) provides a ligand contact to substrate. 84–85 (SK) contacts NADPH. The active-site Thioimide intermediate is cysteine 178. Aspartate 185 serves as the catalytic Proton donor. Residue 217-218 (HE) participates in substrate binding. Position 246-247 (246-247 (RG)) interacts with NADPH.

This sequence belongs to the GTP cyclohydrolase I family. QueF type 2 subfamily. Homodimer.

The protein localises to the cytoplasm. It carries out the reaction 7-aminomethyl-7-carbaguanine + 2 NADP(+) = 7-cyano-7-deazaguanine + 2 NADPH + 3 H(+). Its pathway is tRNA modification; tRNA-queuosine biosynthesis. Functionally, catalyzes the NADPH-dependent reduction of 7-cyano-7-deazaguanine (preQ0) to 7-aminomethyl-7-deazaguanine (preQ1). The polypeptide is NADPH-dependent 7-cyano-7-deazaguanine reductase (Stenotrophomonas maltophilia (strain K279a)).